Here is an 863-residue protein sequence, read N- to C-terminus: Glycogen phosphorylase (863 aa).

Residue Lys-618 is modified to N6-(pyridoxal phosphate)lysine.

This sequence belongs to the glycogen phosphorylase family. Pyridoxal 5'-phosphate is required as a cofactor.

It carries out the reaction [(1-&gt;4)-alpha-D-glucosyl](n) + phosphate = [(1-&gt;4)-alpha-D-glucosyl](n-1) + alpha-D-glucose 1-phosphate. Functionally, phosphorylase is an important allosteric enzyme in carbohydrate metabolism. Enzymes from different sources differ in their regulatory mechanisms and in their natural substrates. However, all known phosphorylases share catalytic and structural properties. The chain is Glycogen phosphorylase (glgP) from Mycobacterium tuberculosis (strain CDC 1551 / Oshkosh).